The sequence spans 222 residues: Orotate phosphoribosyltransferase (222 aa).

A 5-phospho-alpha-D-ribose 1-diphosphate-binding site is contributed by Lys-29. 37-38 (FF) is a binding site for orotate. 5-phospho-alpha-D-ribose 1-diphosphate-binding positions include 75-76 (YK), Arg-101, Lys-102, Lys-105, His-107, and 126-134 (DDVISAGTS). Residues Ser-130 and Arg-158 each contribute to the orotate site.

This sequence belongs to the purine/pyrimidine phosphoribosyltransferase family. PyrE subfamily. Homodimer. It depends on Mg(2+) as a cofactor.

The catalysed reaction is orotidine 5'-phosphate + diphosphate = orotate + 5-phospho-alpha-D-ribose 1-diphosphate. It functions in the pathway pyrimidine metabolism; UMP biosynthesis via de novo pathway; UMP from orotate: step 1/2. Catalyzes the transfer of a ribosyl phosphate group from 5-phosphoribose 1-diphosphate to orotate, leading to the formation of orotidine monophosphate (OMP). This Polynucleobacter necessarius subsp. necessarius (strain STIR1) protein is Orotate phosphoribosyltransferase.